We begin with the raw amino-acid sequence, 301 residues long: Growth-regulating factor 2 (301 aa).

One can recognise a QLQ domain in the interval 11 to 46 (LFTATQWQELEHQALIYKYMAAGAPVPPDLLLHLRH). 2 short sequence motifs (bipartite nuclear localization signal) span residues 83 to 102 (RRVEDPEPGRCRRTDGKKWR) and 120 to 127 (RGKNRSRK). The 45-residue stretch at 87-131 (DPEPGRCRRTDGKKWRCSREAYGESKYCEKHMHRGKNRSRKPVEM) folds into the WRC domain.

This sequence belongs to the GRF family.

The protein localises to the nucleus. In terms of biological role, transcription activator that plays a regulatory role in gibberellin-induced stem elongation. This chain is Growth-regulating factor 2 (GRF2), found in Oryza sativa subsp. japonica (Rice).